The sequence spans 472 residues: Protein translocase subunit SecD (472 aa).

6 helical membrane-spanning segments follow: residues 7–27, 298–318, 326–345, 349–368, 392–414, and 432–452; these read LLLL…KLPL, LVAG…YYRL, SLMI…GVTL, GIAG…VLIF, AFSS…FWFG, and SLFT…LSLP.

It belongs to the SecD/SecF family. SecD subfamily. In terms of assembly, forms a complex with SecF. Part of the essential Sec protein translocation apparatus which comprises SecA, SecYEG and auxiliary proteins SecDF. Other proteins may also be involved.

It is found in the cell inner membrane. Part of the Sec protein translocase complex. Interacts with the SecYEG preprotein conducting channel. SecDF uses the proton motive force (PMF) to complete protein translocation after the ATP-dependent function of SecA. Functionally, probably participates in protein translocation into and across both the cytoplasmic and thylakoid membranes in cyanobacterial cells. In Synechocystis sp. (strain ATCC 27184 / PCC 6803 / Kazusa), this protein is Protein translocase subunit SecD.